A 211-amino-acid chain; its full sequence is UPF0056 membrane protein YvbG (211 aa).

6 helical membrane passes run 1 to 21 (MMFS…NPIG), 47 to 67 (ILSF…FKLF), 69 to 89 (INIH…AYNL), 114 to 134 (ISVT…ATVM), 150 to 170 (MIGI…SAFI), and 188 to 208 (LILA…MFPV).

Belongs to the UPF0056 (MarC) family.

Its subcellular location is the cell membrane. The chain is UPF0056 membrane protein YvbG (yvbG) from Bacillus subtilis (strain 168).